A 343-amino-acid chain; its full sequence is L-threonine 3-dehydrogenase (343 aa).

C40 is a binding site for Zn(2+). Catalysis depends on charge relay system residues T42 and H45. Zn(2+)-binding residues include H65, E66, C95, C98, C101, and C109. Residues I177, D197, R202, 264-266 (LGI), and 288-289 (IY) contribute to the NAD(+) site.

The protein belongs to the zinc-containing alcohol dehydrogenase family. Homotetramer. The cofactor is Zn(2+).

Its subcellular location is the cytoplasm. It carries out the reaction L-threonine + NAD(+) = (2S)-2-amino-3-oxobutanoate + NADH + H(+). It functions in the pathway amino-acid degradation; L-threonine degradation via oxydo-reductase pathway; glycine from L-threonine: step 1/2. Functionally, catalyzes the NAD(+)-dependent oxidation of L-threonine to 2-amino-3-ketobutyrate. The sequence is that of L-threonine 3-dehydrogenase from Aliivibrio fischeri (strain MJ11) (Vibrio fischeri).